The sequence spans 324 residues: Fructose-1,6-bisphosphatase class 1 (324 aa).

The Mg(2+) site is built by glutamate 88, aspartate 107, leucine 109, and aspartate 110. Residues 110–113 (DGSS), asparagine 199, and lysine 265 each bind substrate. Position 271 (glutamate 271) interacts with Mg(2+).

This sequence belongs to the FBPase class 1 family. Homotetramer. It depends on Mg(2+) as a cofactor.

It localises to the cytoplasm. It carries out the reaction beta-D-fructose 1,6-bisphosphate + H2O = beta-D-fructose 6-phosphate + phosphate. The protein operates within carbohydrate biosynthesis; gluconeogenesis. The protein is Fructose-1,6-bisphosphatase class 1 of Neisseria meningitidis serogroup A / serotype 4A (strain DSM 15465 / Z2491).